The chain runs to 117 residues: Cell division protein FtsB (117 aa).

Topologically, residues 1-6 are cytoplasmic; sequence MRDWRW. The chain crosses the membrane as a helical span at residues 7 to 24; that stretch reads MLLVLALLLGWLQYRFWF. At 25–117 the chain is on the periplasmic side; it reads GPGNSGEVMM…QVGDHPADVP (93 aa). A coiled-coil region spans residues 29 to 69; that stretch reads SGEVMMLEAQVANQERDNEGLQQRNDALAAEVKDLKEGQSA.

The protein belongs to the FtsB family. As to quaternary structure, part of a complex composed of FtsB, FtsL and FtsQ.

It localises to the cell inner membrane. Its function is as follows. Essential cell division protein. May link together the upstream cell division proteins, which are predominantly cytoplasmic, with the downstream cell division proteins, which are predominantly periplasmic. This chain is Cell division protein FtsB, found in Stenotrophomonas maltophilia (strain K279a).